The sequence spans 631 residues: Dolichyl-diphosphooligosaccharide--protein glycosyltransferase subunit 2 (631 aa).

Positions methionine 1 to alanine 22 are cleaved as a signal peptide. At leucine 23–valine 540 the chain is on the lumenal side. Asparagine 106 carries an N-linked (GlcNAc...) asparagine glycan. Residue lysine 154 forms a Glycyl lysine isopeptide (Lys-Gly) (interchain with G-Cter in ubiquitin) linkage. The chain crosses the membrane as a helical span at residues valine 541–isoleucine 561. Residues arginine 562 to threonine 571 are Cytoplasmic-facing. Residues phenylalanine 572 to valine 592 form a helical membrane-spanning segment. At tyrosine 593 to glutamine 596 the chain is on the lumenal side. The chain crosses the membrane as a helical span at residues leucine 597–glycine 617. At asparagine 618–histidine 631 the chain is on the cytoplasmic side.

It belongs to the SWP1 family. In terms of assembly, component of the oligosaccharyltransferase (OST) complex. OST exists in two different complex forms which contain common core subunits RPN1, RPN2, OST48, OST4, DAD1 and TMEM258, either STT3A or STT3B as catalytic subunits, and form-specific accessory subunits. STT3A complex assembly occurs through the formation of 3 subcomplexes. Subcomplex 1 contains RPN1 and TMEM258, subcomplex 2 contains the STT3A-specific subunits STT3A, DC2/OSTC, and KCP2 as well as the core subunit OST4, and subcomplex 3 contains RPN2, DAD1, and OST48. The STT3A complex can form stable complexes with the Sec61 complex or with both the Sec61 and TRAP complexes. Interacts with DDI2. Interacts with TMEM35A/NACHO.

It localises to the endoplasmic reticulum. It is found in the endoplasmic reticulum membrane. It functions in the pathway protein modification; protein glycosylation. Its function is as follows. Subunit of the oligosaccharyl transferase (OST) complex that catalyzes the initial transfer of a defined glycan (Glc(3)Man(9)GlcNAc(2) in eukaryotes) from the lipid carrier dolichol-pyrophosphate to an asparagine residue within an Asn-X-Ser/Thr consensus motif in nascent polypeptide chains, the first step in protein N-glycosylation. N-glycosylation occurs cotranslationally and the complex associates with the Sec61 complex at the channel-forming translocon complex that mediates protein translocation across the endoplasmic reticulum (ER). All subunits are required for a maximal enzyme activity. This is Dolichyl-diphosphooligosaccharide--protein glycosyltransferase subunit 2 from Bos taurus (Bovine).